A 242-amino-acid chain; its full sequence is Orotidine 5'-phosphate decarboxylase (242 aa).

Residues aspartate 16, lysine 37, aspartate 64–threonine 73, threonine 128, arginine 190, glutamine 199, glycine 219, and arginine 220 contribute to the substrate site. Lysine 66 functions as the Proton donor in the catalytic mechanism.

Belongs to the OMP decarboxylase family. Type 1 subfamily. Homodimer.

It catalyses the reaction orotidine 5'-phosphate + H(+) = UMP + CO2. The protein operates within pyrimidine metabolism; UMP biosynthesis via de novo pathway; UMP from orotate: step 2/2. Its function is as follows. Catalyzes the decarboxylation of orotidine 5'-monophosphate (OMP) to uridine 5'-monophosphate (UMP). The polypeptide is Orotidine 5'-phosphate decarboxylase (Prochlorococcus marinus (strain MIT 9312)).